Reading from the N-terminus, the 274-residue chain is Rhamnulose-1-phosphate aldolase (274 aa).

Glu117 is a catalytic residue. Zn(2+)-binding residues include His141, His143, and His212.

This sequence belongs to the aldolase class II family. RhaD subfamily. In terms of assembly, homotetramer. Zn(2+) is required as a cofactor.

It is found in the cytoplasm. It carries out the reaction L-rhamnulose 1-phosphate = (S)-lactaldehyde + dihydroxyacetone phosphate. The protein operates within carbohydrate degradation; L-rhamnose degradation; glycerone phosphate from L-rhamnose: step 3/3. In terms of biological role, catalyzes the reversible cleavage of L-rhamnulose-1-phosphate to dihydroxyacetone phosphate (DHAP) and L-lactaldehyde. The polypeptide is Rhamnulose-1-phosphate aldolase (Escherichia coli (strain SMS-3-5 / SECEC)).